The following is a 296-amino-acid chain: N-acetylmuramic acid 6-phosphate etherase (296 aa).

In terms of domain architecture, SIS spans 54–217 (VIASFQQGGR…STTAMVGIGK (164 aa)). Glu-82 (proton donor) is an active-site residue. Glu-113 is a catalytic residue.

The protein belongs to the GCKR-like family. MurNAc-6-P etherase subfamily. As to quaternary structure, homodimer.

It carries out the reaction N-acetyl-D-muramate 6-phosphate + H2O = N-acetyl-D-glucosamine 6-phosphate + (R)-lactate. It participates in amino-sugar metabolism; N-acetylmuramate degradation. Its function is as follows. Specifically catalyzes the cleavage of the D-lactyl ether substituent of MurNAc 6-phosphate, producing GlcNAc 6-phosphate and D-lactate. The sequence is that of N-acetylmuramic acid 6-phosphate etherase from Shouchella clausii (strain KSM-K16) (Alkalihalobacillus clausii).